We begin with the raw amino-acid sequence, 312 residues long: Aspartoacylase (312 aa).

The Zn(2+) site is built by H20 and E23. Residues R62, N69, and R70 each coordinate N-acetyl-L-aspartate. Zn(2+) is bound at residue H115. Residues Y163 and R167 each coordinate N-acetyl-L-aspartate. E177 serves as the catalytic Proton donor/acceptor. An N-acetyl-L-aspartate-binding site is contributed by Y287.

This sequence belongs to the AspA/AstE family. Aspartoacylase subfamily. Homodimer. It depends on Zn(2+) as a cofactor.

It localises to the cytoplasm. It is found in the nucleus. It catalyses the reaction an N-acyl-L-aspartate + H2O = a carboxylate + L-aspartate. The enzyme catalyses N-acetyl-L-aspartate + H2O = L-aspartate + acetate. In terms of biological role, catalyzes the deacetylation of N-acetylaspartic acid (NAA) to produce acetate and L-aspartate. NAA occurs in high concentration in brain and its hydrolysis NAA plays a significant part in the maintenance of intact white matter. In other tissues it acts as a scavenger of NAA from body fluids. The sequence is that of Aspartoacylase from Mus musculus (Mouse).